The chain runs to 243 residues: Probable septum site-determining protein MinC (243 aa).

The protein belongs to the MinC family. Interacts with MinD and FtsZ.

In terms of biological role, cell division inhibitor that blocks the formation of polar Z ring septums. Rapidly oscillates between the poles of the cell to destabilize FtsZ filaments that have formed before they mature into polar Z rings. Prevents FtsZ polymerization. The chain is Probable septum site-determining protein MinC from Wigglesworthia glossinidia brevipalpis.